A 231-amino-acid polypeptide reads, in one-letter code: Killer cell lectin-like receptor subfamily F member 1 (231 aa).

Residues 1-38 lie on the Cytoplasmic side of the membrane; that stretch reads MQDEERYMTLNVQSKKRTSTQTTQLTFKDYSVVLHWYK. Tyr-7 is subject to Phosphotyrosine. Residues 39–59 traverse the membrane as a helical; Signal-anchor for type II membrane protein segment; that stretch reads ILLGISGTLNGILALALISLI. The Extracellular portion of the chain corresponds to 60-231; that stretch reads LLVSQGVLLK…SSVFKWICQY (172 aa). N-linked (GlcNAc...) asparagine glycans are attached at residues Asn-77, Asn-91, Asn-96, and Asn-176. Residues 121-230 form the C-type lectin domain; the sequence is YRGKCYWFSN…CSSVFKWICQ (110 aa). Intrachain disulfides connect Cys-142-Cys-229 and Cys-208-Cys-221.

In terms of assembly, homodimer. Interacts with CLEC2B. Post-translationally, phosphorylated on Tyr-7; this phosphorylation is required for NKp80/KLRF1-mediated cytotoxicity.

The protein resides in the membrane. In terms of biological role, functions as an activating receptor involved in immunosurveillance upon binding to various ligands displayed at the surface of myeloid cells. Upon interaction with CLEC2B ligand, stimulates NK-cell cytotoxicity and cytokine production leading to the cytolysis of malignant CLEC2B-expressing myeloid cells. Actviation of the common cytotoxicity pathway involves SRC and SYK kinases. The chain is Killer cell lectin-like receptor subfamily F member 1 (KLRF1) from Macaca fascicularis (Crab-eating macaque).